The chain runs to 383 residues: Glucose-1-phosphate adenylyltransferase (383 aa).

Residues Tyr-100, Gly-165, 180-181 (EK), and Ser-191 each bind alpha-D-glucose 1-phosphate.

It belongs to the bacterial/plant glucose-1-phosphate adenylyltransferase family. Homotetramer.

The enzyme catalyses alpha-D-glucose 1-phosphate + ATP + H(+) = ADP-alpha-D-glucose + diphosphate. It functions in the pathway glycan biosynthesis; glycogen biosynthesis. Its function is as follows. Involved in the biosynthesis of ADP-glucose, a building block required for the elongation reactions to produce glycogen. Catalyzes the reaction between ATP and alpha-D-glucose 1-phosphate (G1P) to produce pyrophosphate and ADP-Glc. The chain is Glucose-1-phosphate adenylyltransferase from Clostridium kluyveri (strain ATCC 8527 / DSM 555 / NBRC 12016 / NCIMB 10680 / K1).